The primary structure comprises 359 residues: MAVVAVLVRKPLEQVSGLLRRRFHRTAPAALQVTVREAINQGMDEELERDEKVFLLGEEVAQYDGAYKVSRGLWKKYGDKRIIDTPISEMGFAGIAVGAAMAGLRPICEFMTFNFSMQAIDQVINSAAKTYYMSGGLQSVPIVFRGPNGASAGVAAQHSQCFAAWYGHCPGLKVVSPWSSEDAKGLIKSAIRDNNPVVVLENELMYGVPFELPSEAQSKDFLIPIGKAKIERQGTHVTIVAHSRPVGHCLEAATVLSKEGIECEVINLRTIRPMDIETIEGSVMKTNHLVTVEGGWPQFGVGAEICARIMEGPAFNFLDAPAVRVTGADVPMPYAKILEDNSVPQVKDIIFAIKKTLNI.

A mitochondrion-targeting transit peptide spans Met1–Ala30. Residue Tyr67 is modified to Phosphotyrosine. Glu89 contacts thiamine diphosphate. Positions 142, 190, 191, 193, and 195 each coordinate K(+). Lys354 bears the N6-acetyllysine mark.

In terms of assembly, heterotetramer of two PDHA1 and two PDHB subunits. The heterotetramer interacts with DLAT, and is part of the multimeric pyruvate dehydrogenase complex that contains multiple copies of pyruvate dehydrogenase (E1), dihydrolipoamide acetyltransferase (DLAT, E2) and lipoamide dehydrogenase (DLD, E3). These subunits are bound to an inner core composed of about 48 DLAT and 12 PDHX molecules. Interacts with DLAT. Requires thiamine diphosphate as cofactor.

It localises to the mitochondrion matrix. It carries out the reaction N(6)-[(R)-lipoyl]-L-lysyl-[protein] + pyruvate + H(+) = N(6)-[(R)-S(8)-acetyldihydrolipoyl]-L-lysyl-[protein] + CO2. In terms of biological role, the pyruvate dehydrogenase complex catalyzes the overall conversion of pyruvate to acetyl-CoA and CO(2), and thereby links the glycolytic pathway to the tricarboxylic cycle. The sequence is that of Pyruvate dehydrogenase E1 component subunit beta, mitochondrial (PDHB) from Bos taurus (Bovine).